A 344-amino-acid polypeptide reads, in one-letter code: 4-dimethylallyltryptophan N-methyltransferase easF (344 aa).

Belongs to the methyltransferase superfamily. Homodimer.

The enzyme catalyses 4-(3-methylbut-2-enyl)-L-tryptophan + S-adenosyl-L-methionine = 4-(3-methylbut-2-enyl)-L-abrine + S-adenosyl-L-homocysteine + H(+). Its pathway is alkaloid biosynthesis; ergot alkaloid biosynthesis. Functionally, 4-dimethylallyltryptophan N-methyltransferase; part of the gene cluster that mediates the biosynthesis of fungal ergot alkaloid ergovaline, the predominant ergopeptine product in E.festucae var. lolii. DmaW catalyzes the first step of ergot alkaloid biosynthesis by condensing dimethylallyl diphosphate (DMAP) and tryptophan to form 4-dimethylallyl-L-tryptophan. The second step is catalyzed by the methyltransferase easF that methylates 4-dimethylallyl-L-tryptophan in the presence of S-adenosyl-L-methionine, resulting in the formation of 4-dimethylallyl-L-abrine. The catalase easC and the FAD-dependent oxidoreductase easE then transform 4-dimethylallyl-L-abrine to chanoclavine-I which is further oxidized by easD in the presence of NAD(+), resulting in the formation of chanoclavine-I aldehyde. Agroclavine dehydrogenase easG then mediates the conversion of chanoclavine-I aldehyde to agroclavine via a non-enzymatic adduct reaction: the substrate is an iminium intermediate that is formed spontaneously from chanoclavine-I aldehyde in the presence of glutathione. The presence of easA is not required to complete this reaction. Further conversion of agroclavine to paspalic acid is a two-step process involving oxidation of agroclavine to elymoclavine and of elymoclavine to paspalic acid, the second step being performed by the elymoclavine oxidase cloA. Paspalic acid is then further converted to D-lysergic acid. Ergovaline is assembled from D-lysergic acid and three different amino acids by the D-lysergyl-peptide-synthetase composed of a monomudular (lpsB) and a trimodular (lpsA) nonribosomal peptide synthetase subunit. The protein is 4-dimethylallyltryptophan N-methyltransferase easF of Epichloe festucae var. lolii (Neotyphodium lolii).